A 425-amino-acid chain; its full sequence is Riboflavin biosynthesis protein RibBA (425 aa).

A DHBP synthase region spans residues 1–204; that stretch reads MTRLDSVERA…IADLIEWRRK (204 aa). D-ribulose 5-phosphate contacts are provided by residues 28-29, D33, 141-145, and E165; these read RE and RPGHT. E29 is a Mg(2+) binding site. Position 144 (H144) interacts with Mg(2+). Positions 205–425 are GTP cyclohydrolase II; sequence HEKHIERVAE…HLPGEFGGAL (221 aa). 259-263 contributes to the GTP binding site; that stretch reads RVHSE. Residues C264, C275, and C277 each coordinate Zn(2+). Residues Q280, 303–305, and T325 each bind GTP; that span reads EGR. Residue D337 is the Proton acceptor; for GTP cyclohydrolase activity of the active site. R339 (nucleophile; for GTP cyclohydrolase activity) is an active-site residue. GTP is bound by residues T360 and K365.

This sequence in the N-terminal section; belongs to the DHBP synthase family. The protein in the C-terminal section; belongs to the GTP cyclohydrolase II family. The cofactor is Mg(2+). It depends on Mn(2+) as a cofactor. Zn(2+) is required as a cofactor.

It catalyses the reaction D-ribulose 5-phosphate = (2S)-2-hydroxy-3-oxobutyl phosphate + formate + H(+). The enzyme catalyses GTP + 4 H2O = 2,5-diamino-6-hydroxy-4-(5-phosphoribosylamino)-pyrimidine + formate + 2 phosphate + 3 H(+). It participates in cofactor biosynthesis; riboflavin biosynthesis; 2-hydroxy-3-oxobutyl phosphate from D-ribulose 5-phosphate: step 1/1. Its pathway is cofactor biosynthesis; riboflavin biosynthesis; 5-amino-6-(D-ribitylamino)uracil from GTP: step 1/4. Functionally, catalyzes the conversion of D-ribulose 5-phosphate to formate and 3,4-dihydroxy-2-butanone 4-phosphate. Catalyzes the conversion of GTP to 2,5-diamino-6-ribosylamino-4(3H)-pyrimidinone 5'-phosphate (DARP), formate and pyrophosphate. The polypeptide is Riboflavin biosynthesis protein RibBA (Mycobacterium marinum (strain ATCC BAA-535 / M)).